The sequence spans 93 residues: Large ribosomal subunit protein uL23cz/uL23cy (93 aa).

It belongs to the universal ribosomal protein uL23 family. As to quaternary structure, part of the 50S ribosomal subunit.

It localises to the plastid. Its subcellular location is the chloroplast. Binds to 23S rRNA. The polypeptide is Large ribosomal subunit protein uL23cz/uL23cy (rpl23-A) (Nymphaea alba (White water-lily)).